The chain runs to 174 residues: MAVKIRLTRMGKIRAPYYRIVVADARTKRDGRAIEEIGQYDPKQEPSLIRVNSERVAYWLSVGAQPTEPVKALLKVTGDWQRFTGEPAPPPMKTAPPKPDKKALFEAAAKEAAGEPRAEATTSRKRSGKHDKGAETTPAAEAAPDAAASADEPAGGASTAAESQDATTDATPSA.

A disordered region spans residues 81–174 (QRFTGEPAPP…DATTDATPSA (94 aa)). Pro residues predominate over residues 87-97 (PAPPPMKTAPP). Positions 98 to 118 (KPDKKALFEAAAKEAAGEPRA) are enriched in basic and acidic residues. The segment covering 135–158 (ETTPAAEAAPDAAASADEPAGGAS) has biased composition (low complexity). The span at 160–174 (AAESQDATTDATPSA) shows a compositional bias: polar residues.

It belongs to the bacterial ribosomal protein bS16 family.

This chain is Small ribosomal subunit protein bS16, found in Acidothermus cellulolyticus (strain ATCC 43068 / DSM 8971 / 11B).